The chain runs to 254 residues: ATP synthase subunit a (254 aa).

A propeptide spans methionine 1–histidine 6 (removed in mature form). The next 7 helical transmembrane spans lie at leucine 32–methionine 52, isoleucine 83–isoleucine 103, serine 119–leucine 139, phenylalanine 146–isoleucine 166, leucine 182–proline 202, threonine 207–leucine 227, and glutamate 228–lysine 248.

It belongs to the ATPase A chain family. F-type ATPases have 2 components, CF(1) - the catalytic core - and CF(0) - the membrane proton channel. CF(1) has five subunits: alpha(3), beta(3), gamma(1), delta(1), epsilon(1). CF(0) has three main subunits: a, b and c.

Its subcellular location is the mitochondrion inner membrane. Its function is as follows. Mitochondrial membrane ATP synthase (F(1)F(0) ATP synthase or Complex V) produces ATP from ADP in the presence of a proton gradient across the membrane which is generated by electron transport complexes of the respiratory chain. F-type ATPases consist of two structural domains, F(1) - containing the extramembraneous catalytic core and F(0) - containing the membrane proton channel, linked together by a central stalk and a peripheral stalk. During catalysis, ATP synthesis in the catalytic domain of F(1) is coupled via a rotary mechanism of the central stalk subunits to proton translocation. Key component of the proton channel; it may play a direct role in the translocation of protons across the membrane. In Mycosarcoma maydis (Corn smut fungus), this protein is ATP synthase subunit a (ATP6).